Reading from the N-terminus, the 704-residue chain is MPRNTALEKYRNIGICAHVDAGKTTTTERILFYTGLSHKIGEVHDGAATMDWMEQEQERGITITSAATTTFWSGMDQQFEKHRINIIDTPGHVDFTIEVERSLRVLDGAVVVFCGSSGVEPQSETVWRQANKYGVPRIVFVNKMDRSGADFERVCAQIKTRLKANVVPVQLNIGAEEDFKGVIDLIRMKAIMWNEEDMGLTYELVDIPADLQDRAEELRMEMIEAAAEASEELMEKYLEGGELSEDEIHQGLRARVLNNEIVLAFCGSAFKNKGVQAVLDGVVRYLPAPNQVPAIKCETEDGEPASRPSSDDAPFAALAFKLATDLFVGNLTFIRVYSGVLKSGDAVYNPVKGKKERVGRIVQMHANKRDEIKEVRAGDIAACIGLKDVTTGDTLCDQEDVVILEKMDFPEPVISVAVEPKSKADQEKMSIALGKLAAEDPSFRVKTDEESGQTIISGMGELHLDIIVDRMRREFKVEANVGNPQVAYRETIRSKVEQEAKFVRQSGGRGQYGHVFVRFEPLDEVDENGEAKVFKFVDEVVGGVVPKEYIGSVAKGIEEQLNNGVLAGYPMIGVKATLYDGSYHDVDSSEMAFKIAGSMALKEGAKKANACILEPIMKVEVVTPEDYLGDVMGDLNRRRGIIEGMDENPSGRVINALVPLAEMFGYATNVRSISQGRASFSMEFKKYAEVPNNIADEIIKSRNS.

The tr-type G domain maps to 8 to 290; that stretch reads EKYRNIGICA…GVVRYLPAPN (283 aa). GTP is bound by residues 17 to 24, 88 to 92, and 142 to 145; these read AHVDAGKT, DTPGH, and NKMD.

Belongs to the TRAFAC class translation factor GTPase superfamily. Classic translation factor GTPase family. EF-G/EF-2 subfamily.

The protein resides in the cytoplasm. In terms of biological role, catalyzes the GTP-dependent ribosomal translocation step during translation elongation. During this step, the ribosome changes from the pre-translocational (PRE) to the post-translocational (POST) state as the newly formed A-site-bound peptidyl-tRNA and P-site-bound deacylated tRNA move to the P and E sites, respectively. Catalyzes the coordinated movement of the two tRNA molecules, the mRNA and conformational changes in the ribosome. This chain is Elongation factor G, found in Francisella tularensis subsp. holarctica (strain FTNF002-00 / FTA).